We begin with the raw amino-acid sequence, 378 residues long: tRNA-specific 2-thiouridylase MnmA (378 aa).

ATP is bound by residues 6–13 (AMSGGVDS) and Leu32. Cys101 functions as the Nucleophile in the catalytic mechanism. Cysteines 101 and 199 form a disulfide. Gly125 serves as a coordination point for ATP. The tract at residues 148–150 (KDQ) is interaction with tRNA. Cys199 (cysteine persulfide intermediate) is an active-site residue.

This sequence belongs to the MnmA/TRMU family.

The protein resides in the cytoplasm. It catalyses the reaction S-sulfanyl-L-cysteinyl-[protein] + uridine(34) in tRNA + AH2 + ATP = 2-thiouridine(34) in tRNA + L-cysteinyl-[protein] + A + AMP + diphosphate + H(+). Its function is as follows. Catalyzes the 2-thiolation of uridine at the wobble position (U34) of tRNA, leading to the formation of s(2)U34. In Renibacterium salmoninarum (strain ATCC 33209 / DSM 20767 / JCM 11484 / NBRC 15589 / NCIMB 2235), this protein is tRNA-specific 2-thiouridylase MnmA.